We begin with the raw amino-acid sequence, 320 residues long: MISVNEKGLAIIDEMLDWEEDVKIESKVLENGATIIDCGVNVEGGYDAGMYLSRLCLADLAEISYTKVDLEGLAVPAIQIATDHPTIACMASQYAGWRIAVGDYFGMGSGPARGLGLKPKELYEEIGYKDEADAAVLVMESDKLPTEEIVEYIAKHCSVEPQNVFIAVAPTSSIAGSVQISARVVETGIHKLESIGYDINKIKSGFGVAPIAPIVGDDTKCMGSTNDCIIYCGETYYTVEDGNAEELEDFVKKAPSSTSRDFGKPFYTTFKEAGFDFFKVDAGMFAPAKITINDLKSKKSFTSGRINPGILLESFGIKNV.

It belongs to the MCH family.

It is found in the cytoplasm. It carries out the reaction 5,10-methenyl-5,6,7,8-tetrahydromethanopterin + H2O = N(5)-formyl-5,6,7,8-tetrahydromethanopterin + H(+). Functionally, catalyzes the hydrolysis of methenyl-H(4)MPT(+) to 5-formyl-H(4)MPT. The polypeptide is Methenyltetrahydromethanopterin cyclohydrolase (Methanococcoides burtonii (strain DSM 6242 / NBRC 107633 / OCM 468 / ACE-M)).